The sequence spans 677 residues: MTQVAKKILVTCALPYANGSIHLGHMLEHIQADVWVRYQRMRGHEVNFICADDAHGTPIMLKAQQLGITPEQMIGEMSQEHQTDFAGFNISYDNYHSTHSEENRQLSELIYSRLKENGFIKNRTISQLYDPEKGMFLPDRFVKGTCPKCKSPDQYGDNCEVCGATYSPTELIEPKSVVSGATPVMRDSEHFFFDLPSFSEMLQAWTRSGALQEQVANKMQEWFESGLQQWDISRDAPYFGFEIPNAPGKYFYVWLDAPIGYMGSFKNLCDKRGDTTSFDEYWKKDSTAELYHFIGKDIVYFHSLFWPAMLEGSNFRKPTNLFVHGYVTVNGAKMSKSRGTFIKASTWLNHFDADSLRYYYTAKLSSRIDDIDLNLEDFVQRVNADIVNKVVNLASRNAGFINKRFDGVLASELADPQLYKTFTDAAEVIGEAWESREFGKAIREIMALADLANRYVDEQAPWVVAKQEGRDADLQAICSMGINLFRVLMTYLKPVLPKLTERAEAFLNTELTWHGIQQPLLGHKVNPFKALYNRIDMKQVEALVEASKEEVKAAATPVTGPLADDPIQETITFDDFAKVDLRVALIENAEFVEGSDKLLRLTLDLGGEKRNVFSGIRSAYPDPQALIGRHTIMVANLAPRKMRFGISEGMVMAAGPGGKDIFLLSPDAGAKPGHQVK.

Positions 15–25 match the 'HIGH' region motif; sequence PYANGSIHLGH. Zn(2+)-binding residues include cysteine 146, cysteine 149, cysteine 159, and cysteine 162. Residues 333 to 337 carry the 'KMSKS' region motif; that stretch reads KMSKS. Position 336 (lysine 336) interacts with ATP. Residues 575 to 677 enclose the tRNA-binding domain; the sequence is DFAKVDLRVA…AGAKPGHQVK (103 aa).

Belongs to the class-I aminoacyl-tRNA synthetase family. MetG type 1 subfamily. Homodimer. It depends on Zn(2+) as a cofactor.

Its subcellular location is the cytoplasm. It catalyses the reaction tRNA(Met) + L-methionine + ATP = L-methionyl-tRNA(Met) + AMP + diphosphate. Its function is as follows. Is required not only for elongation of protein synthesis but also for the initiation of all mRNA translation through initiator tRNA(fMet) aminoacylation. This chain is Methionine--tRNA ligase, found in Escherichia coli O17:K52:H18 (strain UMN026 / ExPEC).